A 523-amino-acid polypeptide reads, in one-letter code: Protein nucleotidyltransferase YdiU (523 aa).

The ATP site is built by Gly101, Gly103, Arg104, Lys128, Asp140, Gly141, Arg198, and Arg205. The active-site Proton acceptor is the Asp275. Asn276 and Asp285 together coordinate Mg(2+). Asp285 lines the ATP pocket.

This sequence belongs to the SELO family. The cofactor is Mg(2+). Requires Mn(2+) as cofactor.

It catalyses the reaction L-seryl-[protein] + ATP = 3-O-(5'-adenylyl)-L-seryl-[protein] + diphosphate. It carries out the reaction L-threonyl-[protein] + ATP = 3-O-(5'-adenylyl)-L-threonyl-[protein] + diphosphate. The catalysed reaction is L-tyrosyl-[protein] + ATP = O-(5'-adenylyl)-L-tyrosyl-[protein] + diphosphate. The enzyme catalyses L-histidyl-[protein] + UTP = N(tele)-(5'-uridylyl)-L-histidyl-[protein] + diphosphate. It catalyses the reaction L-seryl-[protein] + UTP = O-(5'-uridylyl)-L-seryl-[protein] + diphosphate. It carries out the reaction L-tyrosyl-[protein] + UTP = O-(5'-uridylyl)-L-tyrosyl-[protein] + diphosphate. In terms of biological role, nucleotidyltransferase involved in the post-translational modification of proteins. It can catalyze the addition of adenosine monophosphate (AMP) or uridine monophosphate (UMP) to a protein, resulting in modifications known as AMPylation and UMPylation. The chain is Protein nucleotidyltransferase YdiU from Aromatoleum aromaticum (strain DSM 19018 / LMG 30748 / EbN1) (Azoarcus sp. (strain EbN1)).